The chain runs to 1070 residues: DNA-directed RNA polymerase subunit beta (1070 aa).

This sequence belongs to the RNA polymerase beta chain family. In plastids the minimal PEP RNA polymerase catalytic core is composed of four subunits: alpha, beta, beta', and beta''. When a (nuclear-encoded) sigma factor is associated with the core the holoenzyme is formed, which can initiate transcription.

It is found in the plastid. The protein resides in the chloroplast. It catalyses the reaction RNA(n) + a ribonucleoside 5'-triphosphate = RNA(n+1) + diphosphate. In terms of biological role, DNA-dependent RNA polymerase catalyzes the transcription of DNA into RNA using the four ribonucleoside triphosphates as substrates. The chain is DNA-directed RNA polymerase subunit beta from Citrus sinensis (Sweet orange).